A 490-amino-acid chain; its full sequence is MGQIVTFFQEVPHVIEEVMNIVLIALSILAILKGLYNVATCGLIGLVTFLLLSGRSCSLIYKGTYELQTLELNMETLNMTMPLSCTKNNSHHYIRVGNETGLELTLTNTSILNHKFCNLSDAHKRNLYDHSLMSIISTFHLSIPNFNQYEAMSCDFNGGKITVQYNLSHSFAVDAAGHCGTLANGVLQTFMRMAWGGSYIALDSGRGNWDCIMTSYQYLIIQNTTWDDHCQFSRPSPIGYLGLLSQRTRDIYISRRLLGTFTWTLSDSEGNETPGGYCLTRWMLIEAELKCFGNTAVAKCNEKHDEEFCDMLRLFDFNKQAIRRLKTEAQMSIQLINKAVNALINDQLIMKNHLRDIMGIPYCNYSRYWYLNHTSTGKTSLPRCWLISNGSYLNETKFSDDIEQQADNMITEMLQKEYIDRQGKTPLGLVDLFVFSTSFYLISIFLHLVKIPTHRHIVGKPCPKPHRLNHMGICSCGLYKQPGVPVRWKR.

The N-myristoyl glycine; by host moiety is linked to residue Gly2. Residues 2–17 (GQIVTFFQEVPHVIEE) are Extracellular-facing. The chain crosses the membrane as a helical span at residues 18–33 (VMNIVLIALSILAILK). Over 34–58 (GLYNVATCGLIGLVTFLLLSGRSCS) the chain is Cytoplasmic. Cys57 lines the Zn(2+) pocket. The Extracellular portion of the chain corresponds to 59-431 (LIYKGTYELQ…QGKTPLGLVD (373 aa)). 6 N-linked (GlcNAc...) asparagine; by host glycosylation sites follow: Asn78, Asn88, Asn98, Asn108, Asn118, and Asn166. Disulfide bonds link Cys85–Cys230, Cys117–Cys154, Cys179–Cys211, Cys278–Cys291, Cys300–Cys309, and Cys363–Cys384. A glycan (N-linked (GlcNAc...) asparagine; by host) is linked at Asn223. Residues Asn364, Asn372, Asn389, and Asn394 are each glycosylated (N-linked (GlcNAc...) asparagine; by host). Residues 432–452 (LFVFSTSFYLISIFLHLVKIP) traverse the membrane as a helical segment. Over 453–490 (THRHIVGKPCPKPHRLNHMGICSCGLYKQPGVPVRWKR) the chain is Cytoplasmic. Zn(2+)-binding residues include His454, His456, Cys462, His466, Cys474, and Cys476.

The protein belongs to the arenaviridae GPC protein family. Interacts with glycoprotein G2. Part of the GP complex (GP-C) together with glycoprotein G1 and glycoprotein G2. The GP-complex interacts with protein Z, which interacts with ribonucleocapsid; these interactions may induce virion budding. As to quaternary structure, homotrimer; disulfide-linked. In pre-fusion state, G1 homotrimers bind G2 homotrimers via ionic interactions. Part of the GP complex (GP-C) together with glycoprotein G2 and the stable signal peptide. Interacts with the primary host receptor DAG1 on the cell surface; this interaction occurs at pH 8.0 but not at pH 6.0 and below. Upon virus internalization and at endosomal pH, interacts with the host lysosomal protein LAMP1; this interaction mediates G1 dissociation from GP-C and membrane fusion. The GP-complex interacts with protein Z, which interacts with ribonucleocapsid; these interactions may induce virion budding. In terms of assembly, homotrimer. Interacts with the stable signal peptide. In pre-fusion state, G2 homotrimers bind G1 homotrimers via ionic interactions. Part of the GP complex (GP-C) together with glycoprotein G1 and the stable signal peptide. Acidification in the endosome triggers rearrangements, which ultimately leads to a 6 helix bundle formed by the two heptad repeat domains (HR1 and HR2) in post-fusion state. The GP-complex interacts with protein Z, which interacts with ribonucleocapsid; these interactions may induce virion budding. Specific enzymatic cleavages in vivo yield mature proteins. GP-C polyprotein is cleaved in the endoplasmic reticulum by the host protease MBTPS1. Only cleaved glycoprotein is incorporated into virions. Post-translationally, the SSP remains stably associated with the GP complex following cleavage by signal peptidase and plays crucial roles in the trafficking of GP through the secretory pathway. In terms of processing, myristoylation is necessary for GP2-mediated fusion activity.

The protein resides in the virion membrane. It is found in the host endoplasmic reticulum membrane. It localises to the host Golgi apparatus membrane. Its subcellular location is the host cell membrane. Functions as a cleaved signal peptide that is retained as the third component of the GP complex (GP-C). Helps to stabilize the spike complex in its native conformation. The SSP is required for efficient glycoprotein expression, post-translational maturation cleavage of G1 and G2, glycoprotein transport to the cell surface plasma membrane, formation of infectious virus particles, and acid pH-dependent glycoprotein-mediated cell fusion. Its function is as follows. Forms the virion spikes together with glycoprotein G2. The glycoprotein spike trimers are connected to the underlying matrix. Interacts with the host receptor. Mediates virus attachment to the host primary receptor alpha-dystroglycan DAG1 (alpha-DG) at the cell surface. This attachment induces virion internalization apparently through macropinocytosis. Following endocytosis, there is a pH-dependent switch from binding DAG1 to the host lysosomal receptor LAMP1. This latter binding triggers the dissociation of GP1, exposing the fusion subunit, GP2, such that fusion can occur. Down-modulates host DAG1. Functionally, forms the virion spikes together with glycoprotein G1. The glycoprotein spike trimers are connected to the underlying matrix. Class I viral fusion protein that directs fusion of viral and host endosomal membranes, leading to delivery of the nucleocapsid into the cytoplasm. Membrane fusion is mediated by irreversible conformational changes induced by acidification. The protein is Pre-glycoprotein polyprotein GP complex of Lassa virus (strain GA391) (LASV).